The following is a 320-amino-acid chain: R2-like ligand binding oxidase (320 aa).

The Mn(2+) site is built by Glu68, Glu101, and His104. Residues 71-162 constitute a cross-link (3-(O4'-tyrosyl)-valine (Val-Tyr)); sequence VTKDIQPFMS…AAQVRASVVY (92 aa). Glu101 is a Fe cation binding site. 3 residues coordinate Fe cation: Glu167, Glu202, and His205.

It belongs to the ribonucleoside diphosphate reductase small chain family. R2-like ligand binding oxidase subfamily. As to quaternary structure, homodimer. Requires Fe cation as cofactor. It depends on Mn(2+) as a cofactor.

In terms of biological role, probable oxidase that might be involved in lipid metabolism. This chain is R2-like ligand binding oxidase (nrdB), found in Mycolicibacterium smegmatis (strain ATCC 700084 / mc(2)155) (Mycobacterium smegmatis).